Here is a 1732-residue protein sequence, read N- to C-terminus: Lys-gingipain W83 (1732 aa).

An N-terminal signal peptide occupies residues 1–24 (MRKLLLLIAASLLGVGLYAQSAKI). A propeptide spanning residues 25–228 (KLDAPTTRTT…ETAYKQLFNR (204 aa)) is cleaved from the precursor. Asp313, Asp337, Asp339, Phe341, and Glu343 together coordinate Ca(2+). The active-site Proton donor is His444. Residue Cys477 is the Nucleophile of the active site. Positions 482 and 491 each coordinate Ca(2+). The disordered stretch occupies residues 965-988 (DAPNGTPNPNPNPNPNPGTTLSES). Positions 970 to 980 (TPNPNPNPNPN) are enriched in pro residues. 21 residues coordinate Ca(2+): Ser988, Glu990, Asp1001, Asp1003, Asp1005, His1007, Ser1022, Gly1024, Asn1043, Asp1146, Glu1147, Asp1433, Glu1435, Asp1446, Asp1448, Asp1450, Asn1452, Ser1470, Ile1472, Asn1490, and Asp1595.

Belongs to the peptidase C25 family. Proteolytically cleaved into a catalytic subunit and three adhesins. Arg-gingipain is involved in this post-translational processing.

The protein localises to the secreted. It catalyses the reaction Endopeptidase with strict specificity for lysyl bonds.. In terms of biological role, cysteine proteinase with a strong preference for substrates with Lys in the P1 position. Hydrolyzes bovine hemoglobin, bovine serum albumin, casein, human placental type I collagen and human IgA and IgG. Disrupts the functions of polymorphonuclear leukocytes. May act as a virulence factor in the development of peridontal disease. Involved in the coaggregation of P.gingivalis with other oral bacteria. Has hemolytic activity; this is mediated by the adhesin domains and does not require the catalytic domain. This Porphyromonas gingivalis (Bacteroides gingivalis) protein is Lys-gingipain W83.